Reading from the N-terminus, the 547-residue chain is Chaperonin GroEL (547 aa).

Residues 30-33, lysine 51, 87-91, glycine 415, and aspartate 495 each bind ATP; these read TLGP and DGTTT.

Belongs to the chaperonin (HSP60) family. As to quaternary structure, forms a cylinder of 14 subunits composed of two heptameric rings stacked back-to-back. Interacts with the co-chaperonin GroES.

It localises to the cytoplasm. The catalysed reaction is ATP + H2O + a folded polypeptide = ADP + phosphate + an unfolded polypeptide.. Together with its co-chaperonin GroES, plays an essential role in assisting protein folding. The GroEL-GroES system forms a nano-cage that allows encapsulation of the non-native substrate proteins and provides a physical environment optimized to promote and accelerate protein folding. The polypeptide is Chaperonin GroEL (Rhizobium leguminosarum bv. trifolii (strain WSM2304)).